Here is a 180-residue protein sequence, read N- to C-terminus: Protein PHLOEM PROTEIN 2-LIKE A9 (180 aa).

Residues 1–21 (MSSQKSSHHKADSKMEQDNNR) are disordered. Positions 9-21 (HKADSKMEQDNNR) are enriched in basic and acidic residues.

In Arabidopsis thaliana (Mouse-ear cress), this protein is Protein PHLOEM PROTEIN 2-LIKE A9 (PP2A9).